The following is a 336-amino-acid chain: Mediator of RNA polymerase II transcription subunit 4 (336 aa).

Disordered stretches follow at residues 1–45 and 59–85; these read MNST…SNVV and NVEE…QDEA. Residues 154 to 192 are a coiled coil; the sequence is QQAAQTIAALERVSEGLDDKIRDMIRKLAECRRELRNYQ. Positions 281–336 are disordered; sequence PVANGVAQNHNNGYAMERRLSTGYGSDNDGDTNMNGRSGLAGLDIFDDDDDDDDDD. Residues 325–336 show a composition bias toward acidic residues; it reads IFDDDDDDDDDD.

It belongs to the Mediator complex subunit 4 family. In terms of assembly, component of the Mediator complex.

Its subcellular location is the nucleus. In terms of biological role, component of the Mediator complex, a coactivator involved in the regulated transcription of nearly all RNA polymerase II-dependent genes. Mediator functions as a bridge to convey information from gene-specific regulatory proteins to the basal RNA polymerase II transcription machinery. Mediator is recruited to promoters by direct interactions with regulatory proteins and serves as a scaffold for the assembly of a functional preinitiation complex with RNA polymerase II and the general transcription factors. In Yarrowia lipolytica (strain CLIB 122 / E 150) (Yeast), this protein is Mediator of RNA polymerase II transcription subunit 4 (MED4).